Consider the following 319-residue polypeptide: Acetyl-coenzyme A carboxylase carboxyl transferase subunit alpha (319 aa).

In terms of domain architecture, CoA carboxyltransferase C-terminal spans 35-296 (NIDEEVHRLR…KAQLLADLAD (262 aa)).

Belongs to the AccA family. Acetyl-CoA carboxylase is a heterohexamer composed of biotin carboxyl carrier protein (AccB), biotin carboxylase (AccC) and two subunits each of ACCase subunit alpha (AccA) and ACCase subunit beta (AccD).

The protein localises to the cytoplasm. The enzyme catalyses N(6)-carboxybiotinyl-L-lysyl-[protein] + acetyl-CoA = N(6)-biotinyl-L-lysyl-[protein] + malonyl-CoA. It participates in lipid metabolism; malonyl-CoA biosynthesis; malonyl-CoA from acetyl-CoA: step 1/1. Functionally, component of the acetyl coenzyme A carboxylase (ACC) complex. First, biotin carboxylase catalyzes the carboxylation of biotin on its carrier protein (BCCP) and then the CO(2) group is transferred by the carboxyltransferase to acetyl-CoA to form malonyl-CoA. The chain is Acetyl-coenzyme A carboxylase carboxyl transferase subunit alpha from Escherichia coli O139:H28 (strain E24377A / ETEC).